Consider the following 585-residue polypeptide: Sodium/calcium exchanger NCL (585 aa).

The next 5 helical transmembrane spans lie at 83 to 103 (VFLILVYGFLMFTAATYLSAG), 106 to 126 (LLLEILGPGIVGGLFLPMLGA), 149 to 169 (VSVGMGLLAGSTVMLLTVIWG), 212 to 232 (IMAISVIPFVIVQLPQMLGST), and 239 to 259 (VLIALILSVLMLISYCVYQVF). 2 EF-hand domains span residues 299–334 (PDEHVIRKLFLTIDANNDGHLSAAELKALIIGISFE) and 339–374 (DKDDAVGKVLQDFDKTLDEQVDQEEFVRGIKQWLIQ). Ca(2+)-binding residues include Asp312, Asn314, Asp316, His318, Glu323, Asp352, Asp356, Gln358, and Glu363. A run of 2 helical transmembrane segments spans residues 427–447 (WITIKAALLLLLGAAIAAAFA) and 457–477 (FSAATGIPSFFISFIALPLAT). Asn478 carries N-linked (GlcNAc...) asparagine glycosylation. The next 3 membrane-spanning stretches (helical) occupy residues 505-525 (CGGVTMNNILCLSVFLAIVYV), 532-552 (FSSEVLVILIVCLVMGGFASF), and 558-578 (LWTCFIAYLLYPFSLGLVYIL).

Belongs to the Ca(2+):cation antiporter (CaCA) (TC 2.A.19) family. Expressed in roots, leaves, stems, petals, stamens, ovules and siliques.

It is found in the cell membrane. The protein resides in the vacuole membrane. Possesses sodium/calcium exchanger (NCX) activity when expressed in a heterologous mammalian CHO-K1 cell system. Does not possess cation/proton exchanger (CAX) or sodium/proton (NHX) activity when expressed in a heterologous yeast cell system. Has the ability to bind calcium in vitro. Participates in the maintenance of calcium homeostasis. May play a role in auxin response, diurnal rhythm and flowering time. Involved in salt stress response. This Arabidopsis thaliana (Mouse-ear cress) protein is Sodium/calcium exchanger NCL.